The primary structure comprises 103 residues: Large ribosomal subunit protein bL21 (103 aa).

This sequence belongs to the bacterial ribosomal protein bL21 family. In terms of assembly, part of the 50S ribosomal subunit. Contacts protein L20.

Its function is as follows. This protein binds to 23S rRNA in the presence of protein L20. The sequence is that of Large ribosomal subunit protein bL21 from Photobacterium profundum (strain SS9).